The primary structure comprises 408 residues: COP9 signalosome complex subunit 4 (408 aa).

Positions 194–374 (RIQDARRRFL…GIIYFESNTT (181 aa)) constitute a PCI domain.

This sequence belongs to the CSN4 family. As to quaternary structure, component of the COP9 signalosome (CSN) complex.

It localises to the cytoplasm. It is found in the nucleus. Functionally, component of the COP9 signalosome (CSN) complex that acts as an regulator of the ubiquitin (Ubl) conjugation pathway by mediating the deneddylation of the cullin subunit of SCF-type E3 ubiquitin-protein ligase complexes. The CSN complex seems to link protein degradation to sexual development. Required for fruit body formation. This chain is COP9 signalosome complex subunit 4 (csnD), found in Emericella nidulans (strain FGSC A4 / ATCC 38163 / CBS 112.46 / NRRL 194 / M139) (Aspergillus nidulans).